We begin with the raw amino-acid sequence, 1778 residues long: Internalin I (1778 aa).

The signal sequence occupies residues 1 to 28 (MKKKFSIVIISVLLLGYLAPFDTLLVGA). The segment at 36-101 (DTAVKTAEAD…NIKTEINTDK (66 aa)) is disordered. Residues 51-62 (IESETGSDDETA) are compositionally biased toward acidic residues. The segment covering 63–88 (EEPKEAKEAEASKETTEKEEKAKTEE) has biased composition (basic and acidic residues). 27 LRR repeats span residues 155-179 (AISQ…EGLQ), 183-204 (NLTS…KDLV), 205-227 (NLVS…EDLV), 228-250 (NLQE…ASLP), 251-272 (VLKE…NPAG), 277-298 (ELET…AKLP), 299-321 (KLKN…NGAT), 322-344 (KLQL…SGLS), 345-367 (ELEM…KNLP), 368-389 (NLVN…NNLP), 390-412 (KLQT…TDLP), 413-434 (QLKT…DNLP), 435-456 (KLEK…TDLP), 457-478 (RLSY…KKLP), 479-500 (LLEW…TNFP), 501-522 (SLNY…TELP), 523-544 (SLKE…HDMP), 545-566 (NLRK…DNLP), 567-588 (KLQS…HDLP), 589-610 (SLET…DNLP), 611-632 (DLTY…GDLP), 633-653 (NLET…GTMD), 657-678 (KLRI…GNLS), 685-707 (NLTE…STLS), 708-729 (RLIY…SNLT), 730-751 (NLQE…SDLE), and 752-773 (NLNK…ANMV). Positions 785-872 (TYTLPTVLSY…SAAKVTADAE (88 aa)) constitute an LRRCT domain. 3 MucBP domains span residues 1510–1569 (DAAA…EQTV), 1575–1634 (AIKP…PQTI), and 1644–1705 (SKKS…SQTV). The segment at 1716 to 1742 (SKDDPKVKGKTNQPSSTDTKLKVDNNS) is disordered. The span at 1725-1742 (KTNQPSSTDTKLKVDNNS) shows a compositional bias: polar residues. Residues 1743-1747 (LPATG) carry the LPXTG sorting signal motif. A Pentaglycyl murein peptidoglycan amidated threonine modification is found at Thr-1746. The propeptide at 1747–1778 (GDTENMILAVLIGFNMLIVASIFLFRKPKTNQ) is removed by sortase.

The protein belongs to the internalin family.

The protein resides in the secreted. It is found in the cell wall. A role in virulence could not be demonstrated. In Listeria monocytogenes serovar 1/2a (strain ATCC BAA-679 / EGD-e), this protein is Internalin I (inlI).